We begin with the raw amino-acid sequence, 288 residues long: Mycothiol S-conjugate amidase (288 aa).

Zn(2+)-binding residues include His-12, Asp-15, and His-142.

The protein belongs to the MshB deacetylase family. Mca subfamily. Monomer. It depends on Zn(2+) as a cofactor.

It carries out the reaction mycothiol S-conjugate + H2O = an N-acetyl-L-cysteine-S-conjugate + 1D-myo-inositol 2-amino-2-deoxy-alpha-D-glucopyranoside. Its activity is regulated as follows. Partially inhibited by MSH when MSmB (a bimane derivative of MSH) is used as substrate. A mycothiol (MSH, N-acetyl-cysteinyl-glucosaminyl-inositol) S-conjugate amidase, it recycles conjugated MSH to the N-acetyl cysteine conjugate and the MSH precursor. Involved in MSH-dependent detoxification of a number of alkylating agents and antibiotics. Activity is specific for the mycothiol moiety. The sequence is that of Mycothiol S-conjugate amidase from Mycolicibacterium smegmatis (strain ATCC 700084 / mc(2)155) (Mycobacterium smegmatis).